A 199-amino-acid polypeptide reads, in one-letter code: Proteasome subunit beta type-2 (199 aa).

It belongs to the peptidase T1B family. In terms of assembly, the 26S proteasome consists of a 20S proteasome core and two 19S regulatory subunits. The 20S proteasome core is composed of 28 subunits that are arranged in four stacked rings, resulting in a barrel-shaped structure. The two end rings are each formed by seven alpha subunits, and the two central rings are each formed by seven beta subunits. The catalytic chamber with the active sites is on the inside of the barrel.

It is found in the cytoplasm. The protein resides in the nucleus. Non-catalytic component of the proteasome, a multicatalytic proteinase complex which is characterized by its ability to cleave peptides with Arg, Phe, Tyr, Leu, and Glu adjacent to the leaving group at neutral or slightly basic pH. The proteasome has an ATP-dependent proteolytic activity. The sequence is that of Proteasome subunit beta type-2 (pbs-4) from Caenorhabditis elegans.